The chain runs to 95 residues: Glutamyl-tRNA(Gln) amidotransferase subunit C (95 aa).

It belongs to the GatC family. Heterotrimer of A, B and C subunits.

It catalyses the reaction L-glutamyl-tRNA(Gln) + L-glutamine + ATP + H2O = L-glutaminyl-tRNA(Gln) + L-glutamate + ADP + phosphate + H(+). It carries out the reaction L-aspartyl-tRNA(Asn) + L-glutamine + ATP + H2O = L-asparaginyl-tRNA(Asn) + L-glutamate + ADP + phosphate + 2 H(+). Its function is as follows. Allows the formation of correctly charged Asn-tRNA(Asn) or Gln-tRNA(Gln) through the transamidation of misacylated Asp-tRNA(Asn) or Glu-tRNA(Gln) in organisms which lack either or both of asparaginyl-tRNA or glutaminyl-tRNA synthetases. The reaction takes place in the presence of glutamine and ATP through an activated phospho-Asp-tRNA(Asn) or phospho-Glu-tRNA(Gln). This Caulobacter vibrioides (strain ATCC 19089 / CIP 103742 / CB 15) (Caulobacter crescentus) protein is Glutamyl-tRNA(Gln) amidotransferase subunit C.